A 354-amino-acid polypeptide reads, in one-letter code: Cellular communication network factor 6 (354 aa).

The first 23 residues, 1–23, serve as a signal peptide directing secretion; sequence MRRLLFCTLLMTGLTQLCCRTQG. Residues 44 to 117 form the IGFBP N-terminal domain; sequence RTEVCRWPCR…RYETGVCAYL (74 aa). 13 disulfides stabilise this stretch: Cys-48/Cys-72, Cys-52/Cys-74, Cys-54/Cys-75, Cys-61/Cys-78, Cys-86/Cys-100, Cys-92/Cys-114, Cys-209/Cys-238, Cys-219/Cys-223, Cys-247/Cys-252, Cys-268/Cys-305, Cys-285/Cys-319, Cys-296/Cys-335, and Cys-299/Cys-337. The TSP type-1 domain maps to 208 to 253; that stretch reads KCLVQATKWTPCSRTCGMGISNRVTNDNANCEMRKERRLCYIQPCS. The CTCK domain maps to 268 to 342; the sequence is CQPTFQLPKA…TSCVCQRDCR (75 aa). N-linked (GlcNAc...) asparagine glycosylation is present at Asn-308.

It belongs to the CCN family.

It localises to the secreted. The protein localises to the mitochondrion. Functionally, plays a role in mitochondrial electron transport and mitochondrial respiration. This Mus musculus (Mouse) protein is Cellular communication network factor 6.